Consider the following 212-residue polypeptide: MPTREIRHPLIRHKLGLMRRADISTKNFRELAQEVGALLTYEATQDLPLETYEIDGWCGKVSVEKIAGKKITVVPILRAGIGMLDGVLSLIPGAKVSAVGVARNEETLEAHTYLEKLAPDINQRLALIIDPMLATGGSMVATIDLLKKAGCKEIRAMVLVAAPEGIEVVEKAHPDVKIYTASIDQRLNEHGYIVPGLGDAGDKIFGTKQKDA.

5-phospho-alpha-D-ribose 1-diphosphate-binding positions include Arg78, Arg103, and 130-138 (DPMLATGGS). Uracil contacts are provided by residues Ile193 and 198-200 (GDA). Asp199 contributes to the 5-phospho-alpha-D-ribose 1-diphosphate binding site.

The protein belongs to the UPRTase family. The cofactor is Mg(2+).

It carries out the reaction UMP + diphosphate = 5-phospho-alpha-D-ribose 1-diphosphate + uracil. Its pathway is pyrimidine metabolism; UMP biosynthesis via salvage pathway; UMP from uracil: step 1/1. Its activity is regulated as follows. Allosterically activated by GTP. In terms of biological role, catalyzes the conversion of uracil and 5-phospho-alpha-D-ribose 1-diphosphate (PRPP) to UMP and diphosphate. This is Uracil phosphoribosyltransferase from Pseudomonas putida (strain ATCC 700007 / DSM 6899 / JCM 31910 / BCRC 17059 / LMG 24140 / F1).